An 86-amino-acid chain; its full sequence is uncharacterized protein (86 aa).

The signal sequence occupies residues Met-1–Ala-25.

This is an uncharacterized protein from Bacillus subtilis (strain 168).